We begin with the raw amino-acid sequence, 182 residues long: ATP-dependent protease subunit HslV (182 aa).

Residue Thr12 is part of the active site. Residues Ala167, Cys170, and Thr173 each contribute to the Na(+) site.

The protein belongs to the peptidase T1B family. HslV subfamily. In terms of assembly, a double ring-shaped homohexamer of HslV is capped on each side by a ring-shaped HslU homohexamer. The assembly of the HslU/HslV complex is dependent on binding of ATP.

It localises to the cytoplasm. The catalysed reaction is ATP-dependent cleavage of peptide bonds with broad specificity.. With respect to regulation, allosterically activated by HslU binding. Protease subunit of a proteasome-like degradation complex believed to be a general protein degrading machinery. The protein is ATP-dependent protease subunit HslV of Chlorobium limicola (strain DSM 245 / NBRC 103803 / 6330).